Consider the following 316-residue polypeptide: Acetyl-coenzyme A carboxylase carboxyl transferase subunit beta (316 aa).

Residues 39–308 enclose the CoA carboxyltransferase N-terminal domain; that stretch reads LWHKCSKCGV…PPHMVLWETM (270 aa). Zn(2+) contacts are provided by C43, C46, C62, and C65. Residues 43–65 form a C4-type zinc finger; the sequence is CSKCGVLAYTKDLKANQMVCIEC.

The protein belongs to the AccD/PCCB family. Acetyl-CoA carboxylase is a heterohexamer composed of biotin carboxyl carrier protein (AccB), biotin carboxylase (AccC) and two subunits each of ACCase subunit alpha (AccA) and ACCase subunit beta (AccD). Requires Zn(2+) as cofactor.

It is found in the cytoplasm. The catalysed reaction is N(6)-carboxybiotinyl-L-lysyl-[protein] + acetyl-CoA = N(6)-biotinyl-L-lysyl-[protein] + malonyl-CoA. It functions in the pathway lipid metabolism; malonyl-CoA biosynthesis; malonyl-CoA from acetyl-CoA: step 1/1. Functionally, component of the acetyl coenzyme A carboxylase (ACC) complex. Biotin carboxylase (BC) catalyzes the carboxylation of biotin on its carrier protein (BCCP) and then the CO(2) group is transferred by the transcarboxylase to acetyl-CoA to form malonyl-CoA. In Nostoc punctiforme (strain ATCC 29133 / PCC 73102), this protein is Acetyl-coenzyme A carboxylase carboxyl transferase subunit beta.